We begin with the raw amino-acid sequence, 221 residues long: Enolase-phosphatase E1 (221 aa).

Belongs to the HAD-like hydrolase superfamily. MasA/MtnC family. In terms of assembly, monomer. The cofactor is Mg(2+).

The enzyme catalyses 5-methylsulfanyl-2,3-dioxopentyl phosphate + H2O = 1,2-dihydroxy-5-(methylsulfanyl)pent-1-en-3-one + phosphate. The protein operates within amino-acid biosynthesis; L-methionine biosynthesis via salvage pathway; L-methionine from S-methyl-5-thio-alpha-D-ribose 1-phosphate: step 3/6. Its pathway is amino-acid biosynthesis; L-methionine biosynthesis via salvage pathway; L-methionine from S-methyl-5-thio-alpha-D-ribose 1-phosphate: step 4/6. Functionally, bifunctional enzyme that catalyzes the enolization of 2,3-diketo-5-methylthiopentyl-1-phosphate (DK-MTP-1-P) into the intermediate 2-hydroxy-3-keto-5-methylthiopentenyl-1-phosphate (HK-MTPenyl-1-P), which is then dephosphorylated to form the acireductone 1,2-dihydroxy-3-keto-5-methylthiopentene (DHK-MTPene). This is Enolase-phosphatase E1 from Hydrogenobaculum sp. (strain Y04AAS1).